The sequence spans 242 residues: Type III pantothenate kinase (242 aa).

Position 7 to 14 (7 to 14) interacts with ATP; the sequence is DLGNSRFK. Residues Tyr91 and 98–101 each bind substrate; that span reads GVDR. The Proton acceptor role is filled by Asp100. Thr121 provides a ligand contact to ATP. Thr171 contributes to the substrate binding site.

Belongs to the type III pantothenate kinase family. Homodimer. NH4(+) is required as a cofactor. K(+) serves as cofactor.

Its subcellular location is the cytoplasm. It catalyses the reaction (R)-pantothenate + ATP = (R)-4'-phosphopantothenate + ADP + H(+). Its pathway is cofactor biosynthesis; coenzyme A biosynthesis; CoA from (R)-pantothenate: step 1/5. Its function is as follows. Catalyzes the phosphorylation of pantothenate (Pan), the first step in CoA biosynthesis. In Xanthomonas axonopodis pv. citri (strain 306), this protein is Type III pantothenate kinase.